A 630-amino-acid polypeptide reads, in one-letter code: Membrane protein insertase YidC (630 aa).

A run of 5 helical transmembrane segments spans residues L10–P30, M396–F416, V470–I490, L528–F548, and F571–W591.

It belongs to the OXA1/ALB3/YidC family. Type 1 subfamily. As to quaternary structure, interacts with the Sec translocase complex via SecD. Specifically interacts with transmembrane segments of nascent integral membrane proteins during membrane integration.

It is found in the cell inner membrane. Required for the insertion and/or proper folding and/or complex formation of integral membrane proteins into the membrane. Involved in integration of membrane proteins that insert both dependently and independently of the Sec translocase complex, as well as at least some lipoproteins. Aids folding of multispanning membrane proteins. The sequence is that of Membrane protein insertase YidC from Caulobacter sp. (strain K31).